The primary structure comprises 404 residues: Probable mannosyltransferase KTR3 (404 aa).

Residues 1-27 (MSVHHKKKLMPKSALLIRKYQKGIRSS) lie on the Cytoplasmic side of the membrane. Residues 28–44 (FIGLIIVLSFLFFMSGS) traverse the membrane as a helical; Signal-anchor for type II membrane protein segment. The segment at 45-83 (RSPEVPIAQGTSVSRVASKDYLMPFTDKSQGVIHPVDDG) is stem region. The Lumenal segment spans residues 45–404 (RSPEVPIAQG…AGNYKLPPGI (360 aa)). Positions 84–404 (KKEKGVMVTL…AGNYKLPPGI (321 aa)) are catalytic. E295 functions as the Nucleophile in the catalytic mechanism.

This sequence belongs to the glycosyltransferase 15 family. As to quaternary structure, interacts with SVP26.

The protein resides in the membrane. In terms of biological role, possible glycosyltransferase that transfers an alpha-D-mannosyl residue from GDP-mannose into lipid-linked oligosaccharide, forming an alpha-(1-&gt;2)-D-mannosyl-D-mannose linkage. The protein is Probable mannosyltransferase KTR3 (KTR3) of Saccharomyces cerevisiae (strain ATCC 204508 / S288c) (Baker's yeast).